We begin with the raw amino-acid sequence, 473 residues long: JmjC domain-containing protein 4 (473 aa).

The region spanning 140–433 (PTDGLLTDFS…DFDHPYLDRN (294 aa)) is the JmjC domain. A disordered region spans residues 452-473 (TNKKNEKRPAEDDSPSQKKTCQ).

The protein resides in the nucleus. Its function is as follows. Has a role in meiosis. This chain is JmjC domain-containing protein 4 (jmj4), found in Schizosaccharomyces pombe (strain 972 / ATCC 24843) (Fission yeast).